The following is a 267-amino-acid chain: 3-methyl-2-oxobutanoate hydroxymethyltransferase (267 aa).

Residues aspartate 45 and aspartate 84 each coordinate Mg(2+). 3-methyl-2-oxobutanoate is bound by residues 45–46, aspartate 84, and lysine 113; that span reads DS. Glutamate 115 contacts Mg(2+). Glutamate 182 functions as the Proton acceptor in the catalytic mechanism.

This sequence belongs to the PanB family. In terms of assembly, homodecamer; pentamer of dimers. The cofactor is Mg(2+).

It is found in the cytoplasm. It catalyses the reaction 3-methyl-2-oxobutanoate + (6R)-5,10-methylene-5,6,7,8-tetrahydrofolate + H2O = 2-dehydropantoate + (6S)-5,6,7,8-tetrahydrofolate. It participates in cofactor biosynthesis; coenzyme A biosynthesis. Functionally, catalyzes the reversible reaction in which hydroxymethyl group from 5,10-methylenetetrahydrofolate is transferred onto alpha-ketoisovalerate to form ketopantoate. The chain is 3-methyl-2-oxobutanoate hydroxymethyltransferase from Saccharolobus islandicus (strain Y.N.15.51 / Yellowstone #2) (Sulfolobus islandicus).